The following is a 376-amino-acid chain: Lipoprotein p33 (376 aa).

The signal sequence occupies residues 1–30 (MKIKKIKLLKALALTGAFGIVATVPVIVSS). Residue Cys31 is the site of N-palmitoyl cysteine attachment. Residue Cys31 is the site of S-diacylglycerol cysteine attachment. The tract at residues 33–59 (STDNNGGTGDNNTGGGGSGTDQQQGTT) is disordered. Positions 38 to 51 (GGTGDNNTGGGGSG) are enriched in gly residues.

This sequence belongs to the p35 lipoprotein family.

It is found in the cell membrane. This is Lipoprotein p33 from Malacoplasma penetrans (strain HF-2) (Mycoplasma penetrans).